A 1219-amino-acid chain; its full sequence is Protein jagged-1 (1219 aa).

The signal sequence occupies residues 1 to 33 (MRSPRTRGRPGRPLSLLLALLCALRAKVCGASG). The Extracellular portion of the chain corresponds to 34-1067 (QFELEILSMQ…QRRPLKNRTD (1034 aa)). Asparagine 143 carries an N-linked (GlcNAc...) asparagine glycan. Positions 185-229 (VTCDDHYYGFGCNKFCRPRDDFFGHYACDQNGNKTCMEGWMGPEC) constitute a DSL domain. 2 cysteine pairs are disulfide-bonded: cysteine 187-cysteine 196 and cysteine 200-cysteine 212. Positions 199-207 (FCRPRDDFF) are important for interaction with NOTCH1. The N-linked (GlcNAc...) asparagine glycan is linked to asparagine 217. 40 disulfide bridges follow: cysteine 220–cysteine 229, cysteine 234–cysteine 245, cysteine 238–cysteine 251, cysteine 253–cysteine 262, cysteine 265–cysteine 276, cysteine 271–cysteine 282, cysteine 284–cysteine 293, cysteine 300–cysteine 312, cysteine 306–cysteine 322, cysteine 324–cysteine 333, cysteine 340–cysteine 351, cysteine 345–cysteine 360, cysteine 362–cysteine 371, cysteine 378–cysteine 389, cysteine 383–cysteine 398, cysteine 400–cysteine 409, cysteine 416–cysteine 427, cysteine 421–cysteine 436, cysteine 438–cysteine 447, cysteine 454–cysteine 464, cysteine 458–cysteine 473, cysteine 475–cysteine 484, cysteine 491–cysteine 502, cysteine 496–cysteine 511, cysteine 513–cysteine 522, cysteine 529–cysteine 540, cysteine 534–cysteine 549, cysteine 551–cysteine 560, cysteine 578–cysteine 605, cysteine 599–cysteine 615, cysteine 617–cysteine 626, cysteine 633–cysteine 644, cysteine 638–cysteine 653, cysteine 655–cysteine 664, cysteine 671–cysteine 682, cysteine 676–cysteine 691, cysteine 693–cysteine 702, cysteine 709–cysteine 720, cysteine 714–cysteine 729, and cysteine 731–cysteine 740. Positions 230–263 (NKAICRQGCSPKHGSCKLPGDCRCQYGWQGLYCD) constitute an EGF-like 1 domain. The EGF-like 2; atypical domain maps to 264–294 (KCIPHPGCVHGTCNEPWQCLCETNWGGQLCD). EGF-like domains follow at residues 296–334 (DLNY…PNCE) and 336–372 (AEHA…PTCS). An EGF-like 5; calcium-binding domain is found at 374-410 (NIDDCSPNNCSHGGTCQDLVNGFKCVCPPQWTGKTCQ). Asparagine 382 carries N-linked (GlcNAc...) asparagine glycosylation. Residues 412–448 (DANECEAKPCVNARSCKNLIASYYCDCLPGWMGQNCD) enclose the EGF-like 6; calcium-binding domain. In terms of domain architecture, EGF-like 7; calcium-binding spans 450-485 (NINDCLGQCQNDASCRDLVNGYRCICPPGYAGDHCE). Residues 487-523 (DIDECASNPCLNGGHCQNEINRFQCLCPTGFSGNLCQ) enclose the EGF-like 8; calcium-binding domain. 2 EGF-like domains span residues 525–561 (DIDY…KNCS) and 586–627 (DTPE…TYCH). Asparagine 559 carries N-linked (GlcNAc...) asparagine glycosylation. An EGF-like 11; calcium-binding domain is found at 629–665 (NINDCEGNPCTNGGTCIDGVNSYKCICSDGWEGAHCE). In terms of domain architecture, EGF-like 12; calcium-binding spans 667 to 703 (NINDCSQNPCHYGGTCRDLVNDFYCDCKNGWKGKTCH). 2 EGF-like domains span residues 705–741 (RDSQ…TTCN) and 744–780 (RNSS…PICT). N-linked (GlcNAc...) asparagine glycosylation is present at asparagine 745. Disulfide bonds link cysteine 748-cysteine 759, cysteine 753-cysteine 768, cysteine 770-cysteine 779, cysteine 786-cysteine 797, cysteine 791-cysteine 806, cysteine 808-cysteine 817, cysteine 824-cysteine 835, cysteine 829-cysteine 844, cysteine 846-cysteine 855, cysteine 925-cysteine 936, and cysteine 948-cysteine 958. An EGF-like 15; calcium-binding domain is found at 782 to 818 (NTNDCSPHPCYNSGTCVDGDNWYRCECAPGFAGPDCR). Residues 820–856 (NINECQSSPCAFGATCVDEINGYQCICPPGHSGAKCH) form the EGF-like 16; calcium-binding domain. 4 N-linked (GlcNAc...) asparagine glycosylation sites follow: asparagine 960, asparagine 991, asparagine 1045, and asparagine 1064. The chain crosses the membrane as a helical span at residues 1068-1093 (FLVPLLSSVLTVAWVCCLVTAFYWCV). The Cytoplasmic segment spans residues 1094-1219 (RKRRRKPSSH…QSLNRMEYIV (126 aa)). The tract at residues 1182-1219 (REEKVPQRTPTKHPNWTNKQDNRDLESAQSLNRMEYIV) is disordered. Polar residues predominate over residues 1189-1200 (RTPTKHPNWTNK).

As to quaternary structure, interacts with NOTCH1. Interacts with NOTCH2 and NOTCH3. In terms of tissue distribution, widely expressed in a variety of tissues.

The protein resides in the membrane. It is found in the cell membrane. Its function is as follows. Ligand for multiple Notch receptors and involved in the mediation of Notch signaling. May be involved in cell-fate decisions during hematopoiesis. Enhances fibroblast growth factor-induced angiogenesis (in vitro). Seems to be involved in early and late stages of mammalian cardiovascular development. Inhibits myoblast differentiation. May regulate fibroblast growth factor-induced angiogenesis. This is Protein jagged-1 (Jag1) from Rattus norvegicus (Rat).